The chain runs to 412 residues: MSDLPRIFRFINRTSLVAQIVVGLLAGALLALFLPGAAKSVALLGDLFVQALKAVAPVLVFVLVTSSLANHKRGQPTHIRPIIVLYALGTLSAAAVAVLASFLFPTSLTLVSEATDVIPPAGVGAVLNTLLFNIVDNPVRALLNGNFIGILAWAIGLGFAFRHAQDSTRRLIGDLSDGVTLIVKVVIRFAPLGVFGLVAGTLADSGFDVLLGYARLLLVLVGAMLFMALVMNPLIVFWQIRRNPYPLVFTCLRESGITAFFTRSSAANIPVNMQLCQRLGLHKDTYSVSIPLGATINMGGAAITITVLTLAAVNTLGIQVDVATAVLLSLLAAVCACGASGVAGGSLLLIPLACSLFGISNDLAMQVVAVGFIIGVVQDSAETALNSSTDVLFTAASCIAHGDIDEGAERRV.

Transmembrane regions (helical) follow at residues 16 to 36, 44 to 64, 82 to 102, 115 to 135, 141 to 161, 179 to 199, 217 to 237, 298 to 318, 330 to 350, and 357 to 377; these read LVAQ…FLPG, LGDL…FVLV, IIVL…LASF, TDVI…FNIV, ALLN…GFAF, VTLI…GLVA, LLVL…LIVF, MGGA…TLGI, LLAA…LLLI, and FGIS…IGVV.

It belongs to the dicarboxylate/amino acid:cation symporter (DAACS) (TC 2.A.23) family.

It is found in the cell inner membrane. It carries out the reaction L-serine(in) + Na(+)(in) = L-serine(out) + Na(+)(out). It catalyses the reaction L-threonine(in) + Na(+)(in) = L-threonine(out) + Na(+)(out). Its function is as follows. Involved in the import of serine and threonine into the cell, with the concomitant import of sodium (symport system). The sequence is that of Serine/threonine transporter SstT from Stutzerimonas stutzeri (strain A1501) (Pseudomonas stutzeri).